The chain runs to 209 residues: Orotate phosphoribosyltransferase (209 aa).

5-phospho-alpha-D-ribose 1-diphosphate contacts are provided by residues Arg-96, Lys-100, His-102, and 122–130 (EDLISTGGS). Position 126 (Ser-126) interacts with orotate.

Belongs to the purine/pyrimidine phosphoribosyltransferase family. PyrE subfamily. Homodimer. Mg(2+) serves as cofactor.

It carries out the reaction orotidine 5'-phosphate + diphosphate = orotate + 5-phospho-alpha-D-ribose 1-diphosphate. It functions in the pathway pyrimidine metabolism; UMP biosynthesis via de novo pathway; UMP from orotate: step 1/2. Catalyzes the transfer of a ribosyl phosphate group from 5-phosphoribose 1-diphosphate to orotate, leading to the formation of orotidine monophosphate (OMP). The sequence is that of Orotate phosphoribosyltransferase from Streptococcus agalactiae serotype III (strain NEM316).